The primary structure comprises 934 residues: Protein unc-45 homolog B (934 aa).

TPR repeat units lie at residues 9–42 (SVQL…CKKE), 48–81 (AVIY…DAAD), and 83–115 (KALY…EPKN). 3 ARM repeats span residues 174-213 (DAGA…GMCT), 216-255 (RARA…CVND), and 753-792 (DKLR…NLVC).

Interacts with apobec2a, apobec2b, hsp90a.1, hsp90a.2, hsp90ab1 and myosin. In terms of tissue distribution, expressed in striated muscle tissue including somites, heart and craniofacial muscle. Detected in mesoderm adjacent to the dorsal midline during the late gastrula stages and in somitic mesoderm during development of trunk skeletal muscle. Also expressed in cranial skeletal muscle and in cardiac and smooth muscle. Detected in somitic muscle and heart primordium of 24 hour embryos. At later stages, expressed in muscles of pectoral fins, jaw, branchial arches and eye.

The protein resides in the cytoplasm. It is found in the myofibril. It localises to the sarcomere. Its subcellular location is the z line. The protein localises to the a band. The protein resides in the perinuclear region. In terms of biological role, acts as a co-chaperone for HSP90 and is required for proper folding of the myosin motor domain. Plays a role in sarcomere formation during muscle cell development. Required for myoseptal integrity, myofiber attachment, motility and craniofacial development. Is necessary for normal early lens development. This chain is Protein unc-45 homolog B, found in Danio rerio (Zebrafish).